The sequence spans 304 residues: Probable 5-dehydro-4-deoxyglucarate dehydratase (304 aa).

Belongs to the DapA family.

The catalysed reaction is 5-dehydro-4-deoxy-D-glucarate + H(+) = 2,5-dioxopentanoate + CO2 + H2O. Its pathway is carbohydrate acid metabolism; D-glucarate degradation; 2,5-dioxopentanoate from D-glucarate: step 2/2. The sequence is that of Probable 5-dehydro-4-deoxyglucarate dehydratase from Rhodococcus jostii (strain RHA1).